A 172-amino-acid chain; its full sequence is uncharacterized protein (172 aa).

4 helical membrane-spanning segments follow: residues 20–40, 48–68, 76–96, and 146–166; these read LVLITISIIALSTAYIAEYIF, CVYERFPYLMLIKISLTALII, LILILITILSSCILSTYHSFV, and MTEYNLLLNICLLIFLGLILF.

It localises to the cell membrane. This is an uncharacterized protein from Rickettsia prowazekii (strain Madrid E).